Consider the following 316-residue polypeptide: Glutathione synthetase (316 aa).

The ATP-grasp domain occupies 125 to 310 (KLFTAWFSDL…ITGMLMDAIE (186 aa)). 151-207 (WEKHSDIILKPLDGMGGASIFRVKEGDPNLGVIAETLTEHGTRYCMAQNYLPAIKDG) contacts ATP. Mg(2+) contacts are provided by Glu281 and Asn283.

Belongs to the prokaryotic GSH synthase family. Homotetramer. The cofactor is Mg(2+). It depends on Mn(2+) as a cofactor.

The catalysed reaction is gamma-L-glutamyl-L-cysteine + glycine + ATP = glutathione + ADP + phosphate + H(+). It functions in the pathway sulfur metabolism; glutathione biosynthesis; glutathione from L-cysteine and L-glutamate: step 2/2. Its activity is regulated as follows. Inhibited by 7,8-dihydrofolate, methotrexate and trimethoprim. This Escherichia coli (strain K12) protein is Glutathione synthetase (gshB).